A 440-amino-acid chain; its full sequence is Enolase 1-2 (440 aa).

2 residues coordinate substrate: H160 and E169. E212 functions as the Proton donor in the catalytic mechanism. D247, E296, and D321 together coordinate Mg(2+). Substrate contacts are provided by E296 and D321. K346 serves as the catalytic Proton acceptor. Substrate-binding positions include 373–376 (SHRS) and K397.

It belongs to the enolase family. In terms of assembly, homodimer. Requires Mg(2+) as cofactor.

The protein localises to the cytoplasm. The catalysed reaction is (2R)-2-phosphoglycerate = phosphoenolpyruvate + H2O. It participates in carbohydrate degradation; glycolysis; pyruvate from D-glyceraldehyde 3-phosphate: step 4/5. This Schizosaccharomyces pombe (strain 972 / ATCC 24843) (Fission yeast) protein is Enolase 1-2 (eno102).